The sequence spans 156 residues: Ribosomal RNA large subunit methyltransferase H (156 aa).

S-adenosyl-L-methionine contacts are provided by residues leucine 73, glycine 104, and leucine 123 to leucine 128.

Belongs to the RNA methyltransferase RlmH family. In terms of assembly, homodimer.

It localises to the cytoplasm. It catalyses the reaction pseudouridine(1915) in 23S rRNA + S-adenosyl-L-methionine = N(3)-methylpseudouridine(1915) in 23S rRNA + S-adenosyl-L-homocysteine + H(+). Specifically methylates the pseudouridine at position 1915 (m3Psi1915) in 23S rRNA. This chain is Ribosomal RNA large subunit methyltransferase H, found in Colwellia psychrerythraea (strain 34H / ATCC BAA-681) (Vibrio psychroerythus).